The primary structure comprises 89 residues: Small ribosomal subunit protein uS15 (89 aa).

It belongs to the universal ribosomal protein uS15 family. Part of the 30S ribosomal subunit. Forms a bridge to the 50S subunit in the 70S ribosome, contacting the 23S rRNA.

Its function is as follows. One of the primary rRNA binding proteins, it binds directly to 16S rRNA where it helps nucleate assembly of the platform of the 30S subunit by binding and bridging several RNA helices of the 16S rRNA. In terms of biological role, forms an intersubunit bridge (bridge B4) with the 23S rRNA of the 50S subunit in the ribosome. This chain is Small ribosomal subunit protein uS15, found in Erwinia tasmaniensis (strain DSM 17950 / CFBP 7177 / CIP 109463 / NCPPB 4357 / Et1/99).